Reading from the N-terminus, the 219-residue chain is Large ribosomal subunit protein uL3 (219 aa).

Belongs to the universal ribosomal protein uL3 family. In terms of assembly, part of the 50S ribosomal subunit. Forms a cluster with proteins L14 and L19.

One of the primary rRNA binding proteins, it binds directly near the 3'-end of the 23S rRNA, where it nucleates assembly of the 50S subunit. The chain is Large ribosomal subunit protein uL3 from Corynebacterium kroppenstedtii (strain DSM 44385 / JCM 11950 / CIP 105744 / CCUG 35717).